The primary structure comprises 262 residues: Acyl-coenzyme A diphosphatase FITM2 (262 aa).

Residues 1-23 (MEHLERCEWLLRGTLVRAAVRRY) lie on the Cytoplasmic side of the membrane. The chain crosses the membrane as a helical span at residues 24-44 (LPWALVASMLAGSLLKELSPL). The Lumenal portion of the chain corresponds to 45-57 (PESYLSNKRNVLN). Residues 58–78 (VYFVKVAWAWTFCLLLPFIAL) form a helical membrane-spanning segment. Residues 79–93 (TNYHLTGKAGLVLRR) are Cytoplasmic-facing. The helical transmembrane segment at 94-114 (LSTLLVGTAIWYICTSIFSNI) threads the bilayer. At 115 to 145 (EHYTGSCYQSPALEGVRKEHQSKQQCHQEGG) the chain is on the lumenal side. A helical transmembrane segment spans residues 146 to 166 (FWHGFDISGHSFLLTFCALMI). Histidine 155 is a catalytic residue. Over 167 to 190 (VEEMSVLHEVKTDRSHCLHTAITT) the chain is Cytoplasmic. The chain crosses the membrane as a helical span at residues 191–211 (LVVALGILTFIWVLMFLCTAV). Topologically, residues 212 to 218 (YFHNLSQ) are lumenal. Histidine 214 is a catalytic residue. Residues 219-239 (KVFGTLFGLLSWYGTYGFWYP) form a helical membrane-spanning segment. The Cytoplasmic portion of the chain corresponds to 240–262 (KAFSPGLPPQSCSLNLKQDSYKK).

This sequence belongs to the FIT family. FIT2 subfamily. In terms of tissue distribution, widely expressed.

The protein resides in the endoplasmic reticulum membrane. It catalyses the reaction an acyl-CoA + H2O = an acyl-4'-phosphopantetheine + adenosine 3',5'-bisphosphate + 2 H(+). The catalysed reaction is (9Z)-octadecenoyl-CoA + H2O = S-(9Z-octadecenoyl)-4'-phosphopantetheine + adenosine 3',5'-bisphosphate + 2 H(+). The enzyme catalyses (5Z,8Z,11Z,14Z)-eicosatetraenoyl-CoA + H2O = S-(5Z,8Z,11Z,14Z-eicosatetraenoyl)-4'-phosphopantetheine + adenosine 3',5'-bisphosphate + 2 H(+). It carries out the reaction hexadecanoyl-CoA + H2O = S-hexadecanoyl-4'-phosphopantetheine + adenosine 3',5'-bisphosphate + 2 H(+). Its function is as follows. Fatty acyl-coenzyme A (CoA) diphosphatase that hydrolyzes fatty acyl-CoA to yield acyl-4'-phosphopantetheine and adenosine 3',5'-bisphosphate. Preferentially hydrolyzes unsaturated long-chain acyl-CoA substrates such as oleoyl-CoA/(9Z)-octadecenoyl-CoA and arachidonoyl-CoA/(5Z,8Z,11Z,14Z)-eicosatetraenoyl-CoA in the endoplasmic reticulum (ER) lumen. This catalytic activity is required for maintaining ER structure and for lipid droplets (LDs) biogenesis, which are lipid storage organelles involved in maintaining lipid and energy homeostasis. Directly binds to diacylglycerol (DAGs) and triacylglycerol, which is also important for LD biogenesis. May support directional budding of nacent LDs from the ER into the cytosol by reducing DAG levels at sites of LD formation. Plays a role in the regulation of cell morphology and cytoskeletal organization. The sequence is that of Acyl-coenzyme A diphosphatase FITM2 from Homo sapiens (Human).